The following is a 382-amino-acid chain: Ubiquitin-like protease 4 (382 aa).

The disordered stretch occupies residues 46 to 106 (GTHLDGSIGE…DNDEWTNQKR (61 aa)). Over residues 84-100 (DLVDEDEEEEDEEDNDE) the composition is skewed to acidic residues.

The protein belongs to the peptidase C48 family. Expressed in hermaphrodite-specific neurons, head muscles, body wall muscles and pharyngeal cells.

The protein localises to the cytoplasm. It localises to the cytoskeleton. Its subcellular location is the microtubule organizing center. The protein resides in the centrosome. It is found in the nucleus. The protein localises to the mitochondrion matrix. Its pathway is protein modification; protein sumoylation. Functionally, protease required for deconjugation of smo-1 conjugates from target proteins which is necessary for cell cycle progression. Required for respiration and the maintenance of normal mitochondrial homeostasis. In response to mitochondrial stress, required for the removal of smo-1 conjugates from the transcription factor dve-1, which promotes the translocation of dve-1 from the cytosol to the nucleus to initiate the mitochondrial unfolded protein response. Furthermore, removes the smo-1 conjugates from the transcription factor atfs-1 to promote its stability and activate the mitochondrial unfolded protein response. Also plays a role in promoting mitochondrial unfolded protein response-mediated innate immunity following infection with P.aeruginosa. The protein is Ubiquitin-like protease 4 of Caenorhabditis elegans.